Reading from the N-terminus, the 349-residue chain is GDSL esterase/lipase At2g19050 (349 aa).

The first 23 residues, 1–23, serve as a signal peptide directing secretion; it reads MAEAIFKALLLVIATTAFATTEA. Residue Ser-38 is the Nucleophile of the active site. Asn-49 is a glycosylation site (N-linked (GlcNAc...) asparagine). Residues Asp-316 and His-319 contribute to the active site.

This sequence belongs to the 'GDSL' lipolytic enzyme family.

The protein resides in the secreted. The protein is GDSL esterase/lipase At2g19050 of Arabidopsis thaliana (Mouse-ear cress).